Reading from the N-terminus, the 257-residue chain is Putative hydro-lyase Bamb_5282 (257 aa).

It belongs to the D-glutamate cyclase family.

The protein is Putative hydro-lyase Bamb_5282 of Burkholderia ambifaria (strain ATCC BAA-244 / DSM 16087 / CCUG 44356 / LMG 19182 / AMMD) (Burkholderia cepacia (strain AMMD)).